Consider the following 227-residue polypeptide: PKHD-type hydroxylase Mfla_2317 (227 aa).

A Fe2OG dioxygenase domain is found at 78-178 (KVFPPLFNRY…RVSSFFWMQS (101 aa)). Residues His-96, Asp-98, and His-159 each coordinate Fe cation. Residue Arg-169 participates in 2-oxoglutarate binding.

Fe(2+) is required as a cofactor. Requires L-ascorbate as cofactor.

The chain is PKHD-type hydroxylase Mfla_2317 from Methylobacillus flagellatus (strain ATCC 51484 / DSM 6875 / VKM B-1610 / KT).